Reading from the N-terminus, the 241-residue chain is MAGHSKWANIQHRKGRQDAKRGKIFTRLIKEITVAAKMGGGDANMNPRLRLAVDKAKAESMPKDNIENAIKRGTGQLDGVDYVECRYEGYGIAGAAVMVDCLTDNKTRTVADVRHAFSKYGGNMGTDGCVAFQFKHCGYLVFAPGVDEDALMEAALEAGAEDVVSNDDGSIEVITGPYEFSDVKDALEAKGFKSEMGEVTMRAENETELSGDDAVRMQKLLDALEDLDDVQDVYTSAVIGE.

Belongs to the TACO1 family.

It is found in the cytoplasm. The polypeptide is Probable transcriptional regulatory protein CV_3123 (Chromobacterium violaceum (strain ATCC 12472 / DSM 30191 / JCM 1249 / CCUG 213 / NBRC 12614 / NCIMB 9131 / NCTC 9757 / MK)).